We begin with the raw amino-acid sequence, 333 residues long: MNSSNLEKLNCKSSIRDEVVPSRKRVTLPPWLEVAKPRLIPLLLATTLGGMALTEEWPLSSPKLICTLGGGALAAAAAGALNCLWEMELDKRMTRTSKRALPAGKLSSETVFLAAVSCTLAASMLLVSGVNYLAAGLTLLGLFSYVILYTVILKPRTTKNIVFGGVAGAIPPLVGASAATGHVGLSGWWLFGLVMLWTPAHFWALAILLKDDYASVGIPMLPSVKGSVFTAKAISRYGWATVLMSIMGVFALPEGGLLYGIMLLPFNGRLLQLINELKKSPDDLSRAKSLFRWSILYMFGICLLLLISRTQLSVEFEQQSMQIFFSILSLLSN.

The next 7 helical transmembrane spans lie at 64 to 84, 110 to 130, 133 to 153, 161 to 181, 189 to 209, 246 to 266, and 287 to 307; these read LICTLGGGALAAAAAGALNCL, TVFLAAVSCTLAASMLLVSGV, LAAGLTLLGLFSYVILYTVIL, IVFGGVAGAIPPLVGASAATG, WLFGLVMLWTPAHFWALAILL, IMGVFALPEGGLLYGIMLLPF, and AKSLFRWSILYMFGICLLLLI.

It belongs to the UbiA prenyltransferase family. Protoheme IX farnesyltransferase subfamily.

The protein localises to the cell inner membrane. The catalysed reaction is heme b + (2E,6E)-farnesyl diphosphate + H2O = Fe(II)-heme o + diphosphate. It participates in porphyrin-containing compound metabolism; heme O biosynthesis; heme O from protoheme: step 1/1. In terms of biological role, converts heme B (protoheme IX) to heme O by substitution of the vinyl group on carbon 2 of heme B porphyrin ring with a hydroxyethyl farnesyl side group. The protein is Protoheme IX farnesyltransferase of Prochlorococcus marinus (strain MIT 9215).